Reading from the N-terminus, the 156-residue chain is Ribosomal RNA large subunit methyltransferase H (156 aa).

Residues L73, G104, and 123-128 (LSSLTL) contribute to the S-adenosyl-L-methionine site.

The protein belongs to the RNA methyltransferase RlmH family. In terms of assembly, homodimer.

The protein resides in the cytoplasm. It catalyses the reaction pseudouridine(1915) in 23S rRNA + S-adenosyl-L-methionine = N(3)-methylpseudouridine(1915) in 23S rRNA + S-adenosyl-L-homocysteine + H(+). Its function is as follows. Specifically methylates the pseudouridine at position 1915 (m3Psi1915) in 23S rRNA. The polypeptide is Ribosomal RNA large subunit methyltransferase H (Bordetella avium (strain 197N)).